The following is a 1212-amino-acid chain: DNA-directed RNA polymerase subunit beta'' (1212 aa).

Residues Cys229, Cys302, Cys309, and Cys312 each coordinate Zn(2+). A disordered region spans residues 1162-1212 (QKETSKNKKETSKNKKETSKNKKETSKNKKETSKNKKETSKNKKEASKNKK).

The protein belongs to the RNA polymerase beta' chain family. RpoC2 subfamily. In plastids the minimal PEP RNA polymerase catalytic core is composed of four subunits: alpha, beta, beta', and beta''. When a (nuclear-encoded) sigma factor is associated with the core the holoenzyme is formed, which can initiate transcription. Zn(2+) serves as cofactor.

It localises to the plastid. It is found in the chloroplast. It carries out the reaction RNA(n) + a ribonucleoside 5'-triphosphate = RNA(n+1) + diphosphate. In terms of biological role, DNA-dependent RNA polymerase catalyzes the transcription of DNA into RNA using the four ribonucleoside triphosphates as substrates. The chain is DNA-directed RNA polymerase subunit beta'' from Cryptomeria japonica (Japanese cedar).